The chain runs to 424 residues: Serine--tRNA ligase (424 aa).

231–233 (TAE) contacts L-serine. 262 to 264 (RSE) is an ATP binding site. E285 provides a ligand contact to L-serine. 349–352 (EISS) provides a ligand contact to ATP. S385 lines the L-serine pocket.

It belongs to the class-II aminoacyl-tRNA synthetase family. Type-1 seryl-tRNA synthetase subfamily. As to quaternary structure, homodimer. The tRNA molecule binds across the dimer.

Its subcellular location is the cytoplasm. It catalyses the reaction tRNA(Ser) + L-serine + ATP = L-seryl-tRNA(Ser) + AMP + diphosphate + H(+). The enzyme catalyses tRNA(Sec) + L-serine + ATP = L-seryl-tRNA(Sec) + AMP + diphosphate + H(+). The protein operates within aminoacyl-tRNA biosynthesis; selenocysteinyl-tRNA(Sec) biosynthesis; L-seryl-tRNA(Sec) from L-serine and tRNA(Sec): step 1/1. Functionally, catalyzes the attachment of serine to tRNA(Ser). Is also able to aminoacylate tRNA(Sec) with serine, to form the misacylated tRNA L-seryl-tRNA(Sec), which will be further converted into selenocysteinyl-tRNA(Sec). The polypeptide is Serine--tRNA ligase (Bacillus pumilus (strain SAFR-032)).